Consider the following 537-residue polypeptide: 2-succinyl-5-enolpyruvyl-6-hydroxy-3-cyclohexene-1-carboxylate synthase (537 aa).

It belongs to the TPP enzyme family. MenD subfamily. In terms of assembly, homodimer. The cofactor is Mg(2+). It depends on Mn(2+) as a cofactor. Requires thiamine diphosphate as cofactor.

The enzyme catalyses isochorismate + 2-oxoglutarate + H(+) = 5-enolpyruvoyl-6-hydroxy-2-succinyl-cyclohex-3-ene-1-carboxylate + CO2. The protein operates within quinol/quinone metabolism; 1,4-dihydroxy-2-naphthoate biosynthesis; 1,4-dihydroxy-2-naphthoate from chorismate: step 2/7. Its pathway is quinol/quinone metabolism; menaquinone biosynthesis. Functionally, catalyzes the thiamine diphosphate-dependent decarboxylation of 2-oxoglutarate and the subsequent addition of the resulting succinic semialdehyde-thiamine pyrophosphate anion to isochorismate to yield 2-succinyl-5-enolpyruvyl-6-hydroxy-3-cyclohexene-1-carboxylate (SEPHCHC). This is 2-succinyl-5-enolpyruvyl-6-hydroxy-3-cyclohexene-1-carboxylate synthase from Desulfotalea psychrophila (strain LSv54 / DSM 12343).